A 78-amino-acid chain; its full sequence is Translational regulator CsrA (78 aa).

This sequence belongs to the CsrA/RsmA family. In terms of assembly, homodimer; the beta-strands of each monomer intercalate to form a hydrophobic core, while the alpha-helices form wings that extend away from the core.

The protein localises to the cytoplasm. Functionally, a translational regulator that binds mRNA to regulate translation initiation and/or mRNA stability. Usually binds in the 5'-UTR at or near the Shine-Dalgarno sequence preventing ribosome-binding, thus repressing translation. Its main target seems to be the major flagellin gene, while its function is anatagonized by FliW. The protein is Translational regulator CsrA of Geobacter metallireducens (strain ATCC 53774 / DSM 7210 / GS-15).